Reading from the N-terminus, the 133-residue chain is Small ribosomal subunit protein uS8 (133 aa).

This sequence belongs to the universal ribosomal protein uS8 family. As to quaternary structure, part of the 30S ribosomal subunit. Contacts proteins S5 and S12.

Functionally, one of the primary rRNA binding proteins, it binds directly to 16S rRNA central domain where it helps coordinate assembly of the platform of the 30S subunit. This is Small ribosomal subunit protein uS8 from Prochlorococcus marinus (strain MIT 9515).